Reading from the N-terminus, the 170-residue chain is Ribosome-binding factor A (170 aa).

The segment at 123 to 170 (AKAGVYAGDEDPYVKPRVIGEDEDDDDEEGDEDGDDVDRSAPGYEPAH) is disordered. Acidic residues predominate over residues 143–158 (EDEDDDDEEGDEDGDD).

It belongs to the RbfA family. As to quaternary structure, monomer. Binds 30S ribosomal subunits, but not 50S ribosomal subunits or 70S ribosomes.

Its subcellular location is the cytoplasm. One of several proteins that assist in the late maturation steps of the functional core of the 30S ribosomal subunit. Associates with free 30S ribosomal subunits (but not with 30S subunits that are part of 70S ribosomes or polysomes). Required for efficient processing of 16S rRNA. May interact with the 5'-terminal helix region of 16S rRNA. In Clavibacter sepedonicus (Clavibacter michiganensis subsp. sepedonicus), this protein is Ribosome-binding factor A.